A 334-amino-acid polypeptide reads, in one-letter code: Phosphoribosylformylglycinamidine cyclo-ligase (334 aa).

Belongs to the AIR synthase family.

Its subcellular location is the cytoplasm. It catalyses the reaction 2-formamido-N(1)-(5-O-phospho-beta-D-ribosyl)acetamidine + ATP = 5-amino-1-(5-phospho-beta-D-ribosyl)imidazole + ADP + phosphate + H(+). The protein operates within purine metabolism; IMP biosynthesis via de novo pathway; 5-amino-1-(5-phospho-D-ribosyl)imidazole from N(2)-formyl-N(1)-(5-phospho-D-ribosyl)glycinamide: step 2/2. This Thermococcus kodakarensis (strain ATCC BAA-918 / JCM 12380 / KOD1) (Pyrococcus kodakaraensis (strain KOD1)) protein is Phosphoribosylformylglycinamidine cyclo-ligase.